The following is a 136-amino-acid chain: Prefoldin subunit alpha (136 aa).

This sequence belongs to the prefoldin subunit alpha family. Heterohexamer of two alpha and four beta subunits.

Its subcellular location is the cytoplasm. Its function is as follows. Molecular chaperone capable of stabilizing a range of proteins. Seems to fulfill an ATP-independent, HSP70-like function in archaeal de novo protein folding. The polypeptide is Prefoldin subunit alpha (Pyrobaculum arsenaticum (strain DSM 13514 / JCM 11321 / PZ6)).